Reading from the N-terminus, the 412-residue chain is CCA-adding enzyme (412 aa).

The ATP site is built by Ser41 and Lys44. CTP-binding residues include Ser41 and Lys44. Residues Asp53, Asp55, and Asp106 each contribute to the Mg(2+) site. Residues His129, Lys149, and Tyr158 each coordinate ATP. CTP contacts are provided by His129, Lys149, and Tyr158.

It belongs to the tRNA nucleotidyltransferase/poly(A) polymerase family. Archaeal CCA-adding enzyme subfamily. Homodimer. Mg(2+) serves as cofactor.

The enzyme catalyses a tRNA precursor + 2 CTP + ATP = a tRNA with a 3' CCA end + 3 diphosphate. It catalyses the reaction a tRNA with a 3' CCA end + 2 CTP + ATP = a tRNA with a 3' CCACCA end + 3 diphosphate. Its function is as follows. Catalyzes the addition and repair of the essential 3'-terminal CCA sequence in tRNAs without using a nucleic acid template. Adds these three nucleotides in the order of C, C, and A to the tRNA nucleotide-73, using CTP and ATP as substrates and producing inorganic pyrophosphate. tRNA 3'-terminal CCA addition is required both for tRNA processing and repair. Also involved in tRNA surveillance by mediating tandem CCA addition to generate a CCACCA at the 3' terminus of unstable tRNAs. While stable tRNAs receive only 3'-terminal CCA, unstable tRNAs are marked with CCACCA and rapidly degraded. In Saccharolobus islandicus (strain M.16.27) (Sulfolobus islandicus), this protein is CCA-adding enzyme.